The following is a 165-amino-acid chain: Late embryogenesis abundant protein D-113 (165 aa).

Positions 1–13 (MQSMKDAAASAKA) are enriched in low complexity. 2 disordered regions span residues 1 to 76 (MQSM…IGGT) and 92 to 165 (GGTG…YRSY). Positions 14–60 (GMEKAKASMQEKVDQMKTRDPNEKEMARERKEERQEDAELRKQEARH) are enriched in basic and acidic residues. A compositionally biased stretch (gly residues) spans 67–76 (HVGGGGIGGT). Residues 132-155 (TTGNQDFPNAASNNAGTRRNTRGG) show a composition bias toward polar residues.

It belongs to the LEA type 1 family.

In terms of biological role, LEA proteins are late embryonic proteins abundant in higher plant seed embryos. There are two subsets of LEA proteins (5a and 5b), the first ones are expressed when the cotyledon weight reach 80 mg and the second set are expressed above 100 mg. The function of those proteins is not known. In Gossypium hirsutum (Upland cotton), this protein is Late embryogenesis abundant protein D-113.